We begin with the raw amino-acid sequence, 298 residues long: ATP-dependent Clp protease proteolytic subunit 5, chloroplastic (298 aa).

The transit peptide at 1 to 100 (MAHACVSTSA…SSPYFPAYAQ (100 aa)) directs the protein to the chloroplast. Glycine 101 carries the post-translational modification N-acetylglycine. Residue serine 193 is the Nucleophile of the active site. The active site involves histidine 218.

Belongs to the peptidase S14 family. In terms of assembly, component of the chloroplastic Clp protease core complex which consist of at least 16 proteins: CLPP4 (3 copies), CLPP5 (3 copies), CLPR4 (2 copies), ClpP1 (1 copy), CLPP6 (1 copy), CLPR2 (1 copy), CLPT1 (1 copy), CLPT2 (1 copy) and 3 copies of CLPP3 and/or CLPR1 and/or CLPR3. The core complex is organized in two heptameric rings, one containing CLPP3,4,5,6 in a 1:2:3:1 ratio and the other CLPP1 and CLPR1,2,3,4 in a 3:1:1:1:1 ratio. Interacts with CHIP. In terms of processing, ubiquitinated in vitro by CHIP. As to expression, mostly expressed in leaves. Also detected in stems, and to a lower extent, in roots (at protein level).

Its subcellular location is the plastid. The protein localises to the chloroplast stroma. The catalysed reaction is Hydrolysis of proteins to small peptides in the presence of ATP and magnesium. alpha-casein is the usual test substrate. In the absence of ATP, only oligopeptides shorter than five residues are hydrolyzed (such as succinyl-Leu-Tyr-|-NHMec, and Leu-Tyr-Leu-|-Tyr-Trp, in which cleavage of the -Tyr-|-Leu- and -Tyr-|-Trp bonds also occurs).. Cleaves peptides in various proteins in a process that requires ATP hydrolysis. Has a chymotrypsin-like activity. Plays a major role in the degradation of misfolded proteins. The sequence is that of ATP-dependent Clp protease proteolytic subunit 5, chloroplastic from Arabidopsis thaliana (Mouse-ear cress).